The following is a 307-amino-acid chain: Coproporphyrin III ferrochelatase (307 aa).

Residues Tyr-12, Arg-29, Arg-45–Tyr-46, Ser-53, and Tyr-124 contribute to the Fe-coproporphyrin III site. The Fe(2+) site is built by His-181 and Glu-263.

The protein belongs to the ferrochelatase family.

The protein resides in the cytoplasm. It carries out the reaction Fe-coproporphyrin III + 2 H(+) = coproporphyrin III + Fe(2+). Its pathway is porphyrin-containing compound metabolism; protoheme biosynthesis. Its function is as follows. Involved in coproporphyrin-dependent heme b biosynthesis. Catalyzes the insertion of ferrous iron into coproporphyrin III to form Fe-coproporphyrin III. The protein is Coproporphyrin III ferrochelatase of Staphylococcus epidermidis (strain ATCC 35984 / DSM 28319 / BCRC 17069 / CCUG 31568 / BM 3577 / RP62A).